We begin with the raw amino-acid sequence, 197 residues long: Fucoxanthin-chlorophyll a-c binding protein C, chloroplastic (197 aa).

The N-terminal 31 residues, 1-31 (MKTAVIASLIAGAAAFAPAKNAARTSVATNM), are a transit peptide targeting the chloroplast. Helical transmembrane passes span 73–94 (ISML…PGTI), 113–133 (IPAG…SSVM), and 174–196 (GRAA…SLLP).

It belongs to the fucoxanthin chlorophyll protein family. As to quaternary structure, the LHC complex of chromophytic algae is composed of fucoxanthin, chlorophyll A and C bound non-covalently by fucoxanthin chlorophyll proteins (FCPs). The ratio of the pigments in LHC; fucoxanthin: chlorophyll C: chlorophyll A; (0.6-1): (0.1-0.3): (1).

The protein localises to the plastid. The protein resides in the chloroplast thylakoid membrane. The light-harvesting complex (LHC) functions as a light receptor, it captures and delivers excitation energy to photosystems with which it is closely associated. Energy is transferred from the carotenoid and chlorophyll C (or B) to chlorophyll A and the photosynthetic reaction centers where it is used to synthesize ATP and reducing power. In Phaeodactylum tricornutum (Diatom), this protein is Fucoxanthin-chlorophyll a-c binding protein C, chloroplastic (FCPC).